A 354-amino-acid chain; its full sequence is UDP-glucose 4-epimerase 1 (354 aa).

8-39 provides a ligand contact to NAD(+); that stretch reads TILVTGGAGYIGSHTVLQLLQLGFRVVVLDNL. Residue Ser133 coordinates substrate. Tyr157 functions as the Proton acceptor in the catalytic mechanism.

This sequence belongs to the NAD(P)-dependent epimerase/dehydratase family. The cofactor is NAD(+).

The enzyme catalyses UDP-alpha-D-glucose = UDP-alpha-D-galactose. It participates in carbohydrate metabolism; galactose metabolism. Functionally, catalyzes the interconversion between UDP-glucose and UDP-galactose. This Oryza sativa subsp. japonica (Rice) protein is UDP-glucose 4-epimerase 1 (UGE-1).